A 317-amino-acid chain; its full sequence is Flagellar hook-associated protein 3 (317 aa).

The protein belongs to the bacterial flagellin family.

The protein resides in the secreted. It is found in the bacterial flagellum. This is Flagellar hook-associated protein 3 (flgL) from Salmonella typhimurium (strain LT2 / SGSC1412 / ATCC 700720).